Reading from the N-terminus, the 551-residue chain is Nose resistant to fluoxetine protein 5 (551 aa).

The N-terminal stretch at 1-20 (MSRNFHIFFLLVSIIQVGNS) is a signal peptide. An intrachain disulfide couples Cys-151 to Cys-232. Positions 241–265 (EDSEQEEGNVETTVAPTPDDDNSTL) are disordered.

The protein belongs to the BPI/LBP/Plunc superfamily. BPI/LBP family. Interacts with ttr-52. Expressed in the body wall muscle cells and detected at the basal surface of pharyngeal cells and basal-lateral membranes of the intestine.

It localises to the secreted. Functionally, plays a role in the uptake of a range of molecules including phosphatidylserine, lipids and xenobiotic compounds from the intestine to surrounding tissues. Possesses lipid transfer activity. Mediates transport of lipids from intestine to reproductive tract. Binds phosphatidylserine. Plays a role in efficient clearance of cell corpses by mediating phosphatidylserine appearance on phagocytic cells, thus promoting phagocytic engulfment of apoptotic cells. Vital for embryonic development. This chain is Nose resistant to fluoxetine protein 5, found in Caenorhabditis elegans.